A 602-amino-acid polypeptide reads, in one-letter code: Threonine--tRNA ligase (602 aa).

Residues 208–499 (DHRKLGTELK…LTEHCAGEFP (292 aa)) form a catalytic region. The Zn(2+) site is built by C300, H351, and H476.

This sequence belongs to the class-II aminoacyl-tRNA synthetase family. Homodimer. The cofactor is Zn(2+).

The protein resides in the cytoplasm. It catalyses the reaction tRNA(Thr) + L-threonine + ATP = L-threonyl-tRNA(Thr) + AMP + diphosphate + H(+). Its function is as follows. Catalyzes the attachment of threonine to tRNA(Thr) in a two-step reaction: L-threonine is first activated by ATP to form Thr-AMP and then transferred to the acceptor end of tRNA(Thr). Also edits incorrectly charged L-seryl-tRNA(Thr). The sequence is that of Threonine--tRNA ligase from Campylobacter jejuni (strain RM1221).